We begin with the raw amino-acid sequence, 599 residues long: Aspartate--tRNA ligase (599 aa).

L-aspartate is bound at residue Glu180. The tract at residues Gln204–Lys207 is aspartate. Position 226 (Arg226) interacts with L-aspartate. ATP-binding positions include Arg226–Glu228 and Gln235. Position 454 (His454) interacts with L-aspartate. Glu488 is an ATP binding site. L-aspartate is bound at residue Arg495. ATP is bound at residue Gly540–Arg543.

The protein belongs to the class-II aminoacyl-tRNA synthetase family. Type 1 subfamily. As to quaternary structure, homodimer.

The protein resides in the cytoplasm. The enzyme catalyses tRNA(Asp) + L-aspartate + ATP = L-aspartyl-tRNA(Asp) + AMP + diphosphate. Functionally, catalyzes the attachment of L-aspartate to tRNA(Asp) in a two-step reaction: L-aspartate is first activated by ATP to form Asp-AMP and then transferred to the acceptor end of tRNA(Asp). This chain is Aspartate--tRNA ligase, found in Clostridium botulinum (strain Eklund 17B / Type B).